A 223-amino-acid chain; its full sequence is Proteasome subunit beta (223 aa).

The propeptide at 1 to 6 (MDTMKG) is removed in mature form; by autocatalysis. Thr-7 acts as the Nucleophile in catalysis.

The protein belongs to the peptidase T1B family. As to quaternary structure, the 20S proteasome core is composed of 14 alpha and 14 beta subunits that assemble into four stacked heptameric rings, resulting in a barrel-shaped structure. The two inner rings, each composed of seven catalytic beta subunits, are sandwiched by two outer rings, each composed of seven alpha subunits. The catalytic chamber with the active sites is on the inside of the barrel. Has a gated structure, the ends of the cylinder being occluded by the N-termini of the alpha-subunits. Is capped at one or both ends by the proteasome regulatory ATPase, PAN.

Its subcellular location is the cytoplasm. The enzyme catalyses Cleavage of peptide bonds with very broad specificity.. The formation of the proteasomal ATPase PAN-20S proteasome complex, via the docking of the C-termini of PAN into the intersubunit pockets in the alpha-rings, triggers opening of the gate for substrate entry. Interconversion between the open-gate and close-gate conformations leads to a dynamic regulation of the 20S proteasome proteolysis activity. Its function is as follows. Component of the proteasome core, a large protease complex with broad specificity involved in protein degradation. This Methanocaldococcus vulcanius (strain ATCC 700851 / DSM 12094 / M7) (Methanococcus vulcanius) protein is Proteasome subunit beta.